A 616-amino-acid polypeptide reads, in one-letter code: ATP-dependent zinc metalloprotease FtsH 3 (616 aa).

The Cytoplasmic segment spans residues 1–9 (MSKNNKKWR). Residues 10–30 (NAGLYALLLIVVLALASAFFD) traverse the membrane as a helical segment. Residues 31–108 (RPTQTRETLS…VQPQSDEGFW (78 aa)) lie on the Lumenal side of the membrane. Residues 109-129 (FRIASTLFLPILLLVGIFFLF) form a helical membrane-spanning segment. The Cytoplasmic segment spans residues 130-616 (RRAQSGPGSQ…NNNAKLALLV (487 aa)). 201-208 (GPPGTGKT) contributes to the ATP binding site. A Zn(2+)-binding site is contributed by H423. E424 is an active-site residue. Residues H427 and D504 each coordinate Zn(2+).

In the central section; belongs to the AAA ATPase family. It in the C-terminal section; belongs to the peptidase M41 family. As to quaternary structure, homohexamer (Potential). Part of a large complex that includes FtsH2 and PSII. Coimmunoprecipitates with YidC. Requires Zn(2+) as cofactor.

The protein resides in the cellular thylakoid membrane. In terms of biological role, acts as a processive, ATP-dependent zinc metallopeptidase for both cytoplasmic and membrane proteins. Plays a role in the quality control of integral membrane proteins. The polypeptide is ATP-dependent zinc metalloprotease FtsH 3 (Synechocystis sp. (strain ATCC 27184 / PCC 6803 / Kazusa)).